Reading from the N-terminus, the 361-residue chain is uncharacterized protein (361 aa).

A signal peptide spans 1–28; that stretch reads MSKSKFTKIIVVICIAAMFITGTSILSF.

This is an uncharacterized protein from Ruminiclostridium cellulolyticum (strain ATCC 35319 / DSM 5812 / JCM 6584 / H10) (Clostridium cellulolyticum).